The primary structure comprises 617 residues: Electron transfer flavoprotein-ubiquinone oxidoreductase, mitochondrial (617 aa).

A mitochondrion-targeting transit peptide spans 1-33 (MQVLLARLACPVYQCFHAIKIKKNYLPLCATRW). FAD is bound at residue 71-85 (VVIVGAGPAGLSAAA). K96 carries the post-translational modification N6-acetyllysine. An intramembrane segment occupies 109 to 130 (IGAHTLSGACLDPRALQELFPD). N6-acetyllysine is present on residues K132 and K223. G305 and G306 together coordinate a ubiquinone. K357 carries the N6-acetyllysine modification. The stretch at 428 to 447 (IGLDVTEYEDNLKKSWVWKE) is an intramembrane region. S551 carries the phosphoserine modification. C561, C586, C589, and C592 together coordinate [4Fe-4S] cluster. The 30-residue stretch at 577–606 (FRLQINAQNCVHCKTCDIKDPSQNINWVVP) folds into the 4Fe-4S ferredoxin-type domain.

It belongs to the ETF-QO/FixC family. In terms of assembly, monomer. [4Fe-4S] cluster is required as a cofactor. Requires FAD as cofactor.

The protein resides in the mitochondrion inner membrane. The catalysed reaction is a ubiquinone + reduced [electron-transfer flavoprotein] = a ubiquinol + oxidized [electron-transfer flavoprotein] + H(+). Functionally, accepts electrons from ETF and reduces ubiquinone. In Bos taurus (Bovine), this protein is Electron transfer flavoprotein-ubiquinone oxidoreductase, mitochondrial (ETFDH).